A 776-amino-acid polypeptide reads, in one-letter code: Protein translocase subunit SecA 2 (776 aa).

Residues Q80, 98–102 (GEGKT), and D486 each bind ATP.

The protein belongs to the SecA family. In terms of assembly, monomer and homodimer. Part of the essential Sec protein translocation apparatus which comprises SecA, SecYEG and auxiliary proteins SecDF. Other proteins may also be involved.

It localises to the cell membrane. Its subcellular location is the cytoplasm. The catalysed reaction is ATP + H2O + cellular proteinSide 1 = ADP + phosphate + cellular proteinSide 2.. In terms of biological role, part of the Sec protein translocase complex. Interacts with the SecYEG preprotein conducting channel. Has a central role in coupling the hydrolysis of ATP to the transfer of proteins into and across the cell membrane, serving as an ATP-driven molecular motor driving the stepwise translocation of polypeptide chains across the membrane. In Listeria welshimeri serovar 6b (strain ATCC 35897 / DSM 20650 / CCUG 15529 / CIP 8149 / NCTC 11857 / SLCC 5334 / V8), this protein is Protein translocase subunit SecA 2.